We begin with the raw amino-acid sequence, 145 residues long: Probable thioredoxin-2 (145 aa).

The region spanning 39–144 is the Thioredoxin domain; sequence VFDIDSVEDF…LDDFIEDVLA (106 aa). Residues Cys-68 and Cys-71 each act as nucleophile in the active site. Cys-68 and Cys-71 form a disulfide bridge.

The protein belongs to the thioredoxin family.

In terms of biological role, participates in various redox reactions through the reversible oxidation of its active center dithiol to a disulfide and catalyzes dithiol-disulfide exchange reactions. The polypeptide is Probable thioredoxin-2 (trx-2) (Caenorhabditis elegans).